The primary structure comprises 74 residues: uncharacterized protein (74 aa).

Basic and acidic residues-rich tracts occupy residues 1-13 and 20-60; these read MKKQ…HQLK and IKAK…KSFE. Residues 1–74 form a disordered region; the sequence is MKKQKSIDKH…ESQMDWHQYK (74 aa). Positions 64 to 74 are enriched in polar residues; the sequence is NESQMDWHQYK.

This is an uncharacterized protein from Bacillus subtilis (strain 168).